Reading from the N-terminus, the 414-residue chain is Esterase FrsA (414 aa).

Belongs to the FrsA family.

The catalysed reaction is a carboxylic ester + H2O = an alcohol + a carboxylate + H(+). In terms of biological role, catalyzes the hydrolysis of esters. The sequence is that of Esterase FrsA from Citrobacter koseri (strain ATCC BAA-895 / CDC 4225-83 / SGSC4696).